We begin with the raw amino-acid sequence, 185 residues long: Small ribosomal subunit protein uS5 (185 aa).

One can recognise an S5 DRBM domain in the interval F18–V81. Residues S157–D185 form a disordered region. Positions R176 to D185 are enriched in basic and acidic residues.

It belongs to the universal ribosomal protein uS5 family. Part of the 30S ribosomal subunit. Contacts proteins S4 and S8.

Its function is as follows. With S4 and S12 plays an important role in translational accuracy. In terms of biological role, located at the back of the 30S subunit body where it stabilizes the conformation of the head with respect to the body. The sequence is that of Small ribosomal subunit protein uS5 from Xanthobacter autotrophicus (strain ATCC BAA-1158 / Py2).